The following is a 305-amino-acid chain: Probable cell division protein WhiA (305 aa).

The H-T-H motif DNA-binding region spans 269-302 (TIKELGELLEPSLGKSGVNHRLRKLVEQANELRK).

Belongs to the WhiA family.

Involved in cell division and chromosome segregation. The protein is Probable cell division protein WhiA of Lactococcus lactis subsp. lactis (strain IL1403) (Streptococcus lactis).